The following is a 31-amino-acid chain: uncharacterized protein (31 aa).

Positions 1–31 are disordered; that stretch reads MKKLERMSEVSQMCSEAKKNRKRMSVVSSVA.

This is an uncharacterized protein from Sulfolobus islandicus filamentous virus (isolate Iceland/Hveragerdi) (SIFV).